Here is a 689-residue protein sequence, read N- to C-terminus: Bifunctional protein GAL10 (689 aa).

A galactowaldenase region spans residues 1 to 345; it reads MSYILVTGGA…TTKNPFGFQI (345 aa). 3-34 lines the NAD(+) pocket; sequence YILVTGGAGYIGSHTVVELVNNGYNVVVVDNL. Residues 346 to 689 form a mutarotase region; sequence NNYSWTKFDS…SYTIYRFENF (344 aa). Histidine 534 (for mutarotase activity) is an active-site residue.

It in the N-terminal section; belongs to the NAD(P)-dependent epimerase/dehydratase family. In the C-terminal section; belongs to the aldose epimerase family. It depends on NAD(+) as a cofactor.

It carries out the reaction UDP-alpha-D-glucose = UDP-alpha-D-galactose. It catalyses the reaction alpha-D-glucose = beta-D-glucose. Its pathway is carbohydrate metabolism; galactose metabolism. It functions in the pathway carbohydrate metabolism; hexose metabolism. Mutarotase converts alpha-aldose to the beta-anomer. It is active on D-glucose, L-arabinose, D-xylose, D-galactose, maltose and lactose. The sequence is that of Bifunctional protein GAL10 (GAL10) from Pachysolen tannophilus (Yeast).